The chain runs to 276 residues: Rhomboid protease GlpG (276 aa).

6 helical membrane-spanning segments follow: residues Gly-94–Leu-114, Ala-142–Gly-162, Leu-169–Gln-189, Phe-192–Trp-212, Leu-229–Met-249, and Ala-250–Leu-270. The Nucleophile role is filled by Ser-201. His-254 is a catalytic residue.

This sequence belongs to the peptidase S54 family.

It localises to the cell inner membrane. It catalyses the reaction Cleaves type-1 transmembrane domains using a catalytic dyad composed of serine and histidine that are contributed by different transmembrane domains.. Rhomboid-type serine protease that catalyzes intramembrane proteolysis. The protein is Rhomboid protease GlpG of Shigella boydii serotype 4 (strain Sb227).